The following is a 65-amino-acid chain: Large ribosomal subunit protein bL28 (65 aa).

This sequence belongs to the bacterial ribosomal protein bL28 family.

The polypeptide is Large ribosomal subunit protein bL28 (Bifidobacterium animalis subsp. lactis (strain AD011)).